A 250-amino-acid chain; its full sequence is DNA repair protein RecO (250 aa).

It belongs to the RecO family.

Its function is as follows. Involved in DNA repair and RecF pathway recombination. The sequence is that of DNA repair protein RecO from Beijerinckia indica subsp. indica (strain ATCC 9039 / DSM 1715 / NCIMB 8712).